A 306-amino-acid chain; its full sequence is Sulfate adenylyltransferase subunit 2 (306 aa).

This sequence belongs to the PAPS reductase family. CysD subfamily. Heterodimer composed of CysD, the smaller subunit, and CysN.

The catalysed reaction is sulfate + ATP + H(+) = adenosine 5'-phosphosulfate + diphosphate. It functions in the pathway sulfur metabolism; hydrogen sulfide biosynthesis; sulfite from sulfate: step 1/3. With CysN forms the ATP sulfurylase (ATPS) that catalyzes the adenylation of sulfate producing adenosine 5'-phosphosulfate (APS) and diphosphate, the first enzymatic step in sulfur assimilation pathway. APS synthesis involves the formation of a high-energy phosphoric-sulfuric acid anhydride bond driven by GTP hydrolysis by CysN coupled to ATP hydrolysis by CysD. The chain is Sulfate adenylyltransferase subunit 2 from Brucella anthropi (strain ATCC 49188 / DSM 6882 / CCUG 24695 / JCM 21032 / LMG 3331 / NBRC 15819 / NCTC 12168 / Alc 37) (Ochrobactrum anthropi).